The chain runs to 306 residues: uncharacterized protein (306 aa).

Helical transmembrane passes span 7–27 (LESW…GYLA), 30–50 (VGII…FMAL), 68–88 (LFIT…LFAL), 95–115 (ADHV…TLFI), 144–164 (AIGV…LMSF), 194–214 (IGAI…VLSV), 232–252 (IAIM…GLIF), and 274–294 (TIPF…NVAP).

The protein localises to the cell membrane. This is an uncharacterized protein from Mycoplasma genitalium (strain ATCC 33530 / DSM 19775 / NCTC 10195 / G37) (Mycoplasmoides genitalium).